A 565-amino-acid polypeptide reads, in one-letter code: FAD-linked oxidoreductase ZEB1 (565 aa).

Residues 1–27 form the signal peptide; it reads MKLSPSKYLPVLLGTLSLTIANPSADC. N-linked (GlcNAc...) asparagine glycans are attached at residues Asn-46, Asn-82, and Asn-100. The region spanning 115–293 is the FAD-binding PCMH-type domain; sequence LGNYVSYAIA…ISMTVKAHPG (179 aa). 3 N-linked (GlcNAc...) asparagine glycosylation sites follow: Asn-340, Asn-352, and Asn-421.

Belongs to the oxygen-dependent FAD-linked oxidoreductase family.

Its pathway is mycotoxin biosynthesis. FAD-linked oxidoreductase; part of the gene cluster that mediates the biosynthesis of zearalenone (ZEA), a nonsteroid estrogen that is a contaminant of cereal grains and causes estrogenic disorders in humans and animals. The ZEA backbone is synthesized from a single acetyl-CoA molecule and eight malonyl-CoA molecules. The reducing polyketide synthase ZEA2 is proposed to synthesize a reduced hexaketide intermediate by using different combinations of its reductive domains during each round of condensation. The hexaketide thioester is then transacylated to the non-reducing polyketide synthase ZEA1 and is further condensed with three malonyl-CoAs without reductive tailoring to yield a mixed reduced/unreduced nonaketide. ZEA1 must be able to interact with ZEA2 to facilitate starter-unit acyltransfer and initiate polyketide biosynthesis. ZEA1 also mediates the required C2-C7 cyclization to form the resorcylate core and catalyzes the formation of the macrolactone. ZEB1 is then responsible for the chemical conversion of beta-zearalenonol (beta-ZOL) to ZEA in the biosynthetic pathway. The sequence is that of FAD-linked oxidoreductase ZEB1 from Gibberella zeae (strain ATCC MYA-4620 / CBS 123657 / FGSC 9075 / NRRL 31084 / PH-1) (Wheat head blight fungus).